A 295-amino-acid chain; its full sequence is Mycothiol acetyltransferase (295 aa).

2 consecutive N-acetyltransferase domains span residues 4 to 138 (TEWR…RPLT) and 149 to 295 (VRIA…YAAN). Aspartate 36 contributes to the 1D-myo-inositol 2-(L-cysteinylamino)-2-deoxy-alpha-D-glucopyranoside binding site. Residues 77–79 (LVV) and 85–90 (RRGIGA) contribute to the acetyl-CoA site. 1D-myo-inositol 2-(L-cysteinylamino)-2-deoxy-alpha-D-glucopyranoside contacts are provided by glutamate 176, lysine 217, and glutamate 225. Acetyl-CoA-binding positions include 229-231 (VGV) and 236-242 (QGRGLGY). Tyrosine 266 provides a ligand contact to 1D-myo-inositol 2-(L-cysteinylamino)-2-deoxy-alpha-D-glucopyranoside. Position 271–276 (271–276 (NSAAVN)) interacts with acetyl-CoA.

It belongs to the acetyltransferase family. MshD subfamily. As to quaternary structure, monomer.

It carries out the reaction 1D-myo-inositol 2-(L-cysteinylamino)-2-deoxy-alpha-D-glucopyranoside + acetyl-CoA = mycothiol + CoA + H(+). Functionally, catalyzes the transfer of acetyl from acetyl-CoA to desacetylmycothiol (Cys-GlcN-Ins) to form mycothiol. This is Mycothiol acetyltransferase (mshD) from Mycolicibacterium smegmatis (strain ATCC 700084 / mc(2)155) (Mycobacterium smegmatis).